Reading from the N-terminus, the 1029-residue chain is Collagen, type I, alpha 1b (1029 aa).

A disordered region spans residues 1 to 990 (QMSYVDHSKS…KAPDPFRGGH (990 aa)). A compositionally biased stretch (pro residues) spans 13–33 (PPQPGPMGPMGPRGPPGPPGS). Low complexity predominate over residues 34-57 (SGPQGFTGPPGEPGEPGASGAMGS). A compositionally biased stretch (basic and acidic residues) spans 67–81 (NGDDGEPGKPGRPGE). Composition is skewed to low complexity over residues 82–91 (RGAAGPQGAR), 120–129 (VPGVMGARGR), and 136–147 (SGARGNDGNTGP). The span at 163–182 (PGGAGAKGETGPAGGRGNEG) shows a compositional bias: gly residues. 3 stretches are compositionally biased toward low complexity: residues 199-223 (AGPA…AGLA), 233-267 (AQGA…PGPA), and 299-309 (ERGAPGARGFP). The span at 310–322 (GADGGAGGKGAPG) shows a compositional bias: gly residues. 2 stretches are compositionally biased toward low complexity: residues 323–351 (ERGA…PGSK) and 429–465 (VGAP…QGAT). Over residues 466–477 (GETGKGLGGPTG) the composition is skewed to gly residues. The segment covering 478–497 (PRGAPGPAGNDGAKGEPGAA) has biased composition (low complexity). Composition is skewed to gly residues over residues 498–507 (GAPGGLGAPG) and 531–540 (GGKGGDGAPG). Composition is skewed to low complexity over residues 571-580 (VAGPTGPRGA) and 593-620 (AGFA…KGDA). Gly residues-rich tracts occupy residues 621–630 (GAPGPGGPVG) and 645–654 (GARGGAGPPG). Composition is skewed to low complexity over residues 655–665 (ATGFPGPAGRV), 694–722 (ETGA…PGXD), 731–743 (PQGL…LPGQ), 830–839 (APGAVGPSGK), and 855–869 (SGPA…PAGA). Residues 870-884 (KGDRGEAGEAGDRGG) are compositionally biased toward basic and acidic residues. The span at 906 to 934 (PAGASGPAGPRGPAGSNGAPGKDGMNGLP) shows a compositional bias: low complexity. A compositionally biased stretch (pro residues) spans 952–967 (AGPPGPPGPAGPPGPP). The Fibrillar collagen NC1 domain maps to 999–1029 (TQKLPLLDLAPMDVGAPDQEFGVEVGPVCFL).

It belongs to the fibrillar collagen family.

Its subcellular location is the secreted. It is found in the extracellular space. It localises to the extracellular matrix. The chain is Collagen, type I, alpha 1b from Epinephelus aeneus (White grouper).